A 544-amino-acid chain; its full sequence is Exodeoxyribonuclease 7 large subunit (544 aa).

The disordered stretch occupies residues 522–544 (PETPPKSRKADNPPEPPEQTSFL).

This sequence belongs to the XseA family. As to quaternary structure, heterooligomer composed of large and small subunits.

The protein localises to the cytoplasm. The enzyme catalyses Exonucleolytic cleavage in either 5'- to 3'- or 3'- to 5'-direction to yield nucleoside 5'-phosphates.. In terms of biological role, bidirectionally degrades single-stranded DNA into large acid-insoluble oligonucleotides, which are then degraded further into small acid-soluble oligonucleotides. In Zymomonas mobilis subsp. mobilis (strain ATCC 31821 / ZM4 / CP4), this protein is Exodeoxyribonuclease 7 large subunit.